The primary structure comprises 465 residues: Ribulose bisphosphate carboxylase large chain (465 aa).

Lys4 is subject to N6,N6,N6-trimethyllysine. The substrate site is built by Asn113 and Thr163. The active-site Proton acceptor is Lys165. Lys167 serves as a coordination point for substrate. Lys191, Asp193, and Glu194 together coordinate Mg(2+). Lys191 bears the N6-carboxylysine mark. His284 functions as the Proton acceptor in the catalytic mechanism. Residues Arg285, His317, and Ser369 each coordinate substrate.

It belongs to the RuBisCO large chain family. Type I subfamily. Heterohexadecamer of 8 large chains and 8 small chains; disulfide-linked. The disulfide link is formed within the large subunit homodimers. The cofactor is Mg(2+). In terms of processing, the disulfide bond which can form in the large chain dimeric partners within the hexadecamer appears to be associated with oxidative stress and protein turnover.

The protein resides in the plastid. The protein localises to the chloroplast. The enzyme catalyses 2 (2R)-3-phosphoglycerate + 2 H(+) = D-ribulose 1,5-bisphosphate + CO2 + H2O. It carries out the reaction D-ribulose 1,5-bisphosphate + O2 = 2-phosphoglycolate + (2R)-3-phosphoglycerate + 2 H(+). Its function is as follows. RuBisCO catalyzes two reactions: the carboxylation of D-ribulose 1,5-bisphosphate, the primary event in carbon dioxide fixation, as well as the oxidative fragmentation of the pentose substrate in the photorespiration process. Both reactions occur simultaneously and in competition at the same active site. This Casuarina equisetifolia (Beach she-oak) protein is Ribulose bisphosphate carboxylase large chain.